The following is a 108-amino-acid chain: UPF0060 membrane protein YnfA (108 aa).

At 1 to 5 (MIKTT) the chain is on the periplasmic side. A helical transmembrane segment spans residues 6–26 (LLFFATALCEIIGCFLPWLWL). At 27-30 (KRNA) the chain is on the cytoplasmic side. A helical membrane pass occupies residues 31–51 (SIWLLLPAGISLALFVWLLTL). At 52-60 (HPAASGRIY) the chain is on the periplasmic side. A helical transmembrane segment spans residues 61 to 81 (AAYGGVYVCTALMWLRVVDGV). Over 82–84 (KLT) the chain is Cytoplasmic. A helical transmembrane segment spans residues 85-105 (LYDWTGALIALCGMLIIVAGW). Residues 106–108 (GRT) are Periplasmic-facing.

This sequence belongs to the UPF0060 family.

The protein resides in the cell inner membrane. The polypeptide is UPF0060 membrane protein YnfA (Shigella dysenteriae serotype 1 (strain Sd197)).